The chain runs to 158 residues: C-type lectin TsL (158 aa).

The signal sequence occupies residues 1 to 23 (MGRFIFVSFGLLVVFLSLSGAKG). In terms of domain architecture, C-type lectin spans 24-158 (SCCTNDSLPM…KNSFLCQCKF (135 aa)). Disulfide bonds link Cys26–Cys37, Cys54–Cys154, Cys61–Cys156, and Cys129–Cys146. N-linked (GlcNAc...) (high mannose) asparagine glycosylation occurs at Asn28. Ca(2+) is bound by residues Gln119, Asp121, Glu127, Asn142, and Asp143. A Galactose-binding motif is present at residues 119 to 121 (QPD).

The protein belongs to the true venom lectin family. As to quaternary structure, homodimer; disulfide-linked. As to expression, expressed by the venom gland.

It is found in the secreted. Its function is as follows. Galactose-binding protein which recognizes specific carbohydrate structures and agglutinates a variety of animal cells by binding to cell-surface glycoproteins and glycolipids. May be a calcium-dependent lectin. The protein is C-type lectin TsL of Trimeresurus stejnegeri (Chinese green tree viper).